The chain runs to 484 residues: Probable sphingolipid transporter spinster homolog 2 (484 aa).

Positions 1-23 (MDVDGEGDRGQNPRIMERDSDSI) are disordered. A helical transmembrane segment spans residues 38-58 (LLFVFCVVNLINYIDRGAIAS). Asn-62 and Asn-85 each carry an N-linked (GlcNAc...) asparagine glycan. The next 11 helical transmembrane spans lie at 93–113 (VLSSAFMVGLLVASPIFASLA), 122–142 (IGVGLSIWTLAVIGCGLSFDF), 147–167 (ICRMFVGVGEASFVSLAAPFI), 181–201 (AVFYMCIPTGYAFGYVYGGVV), 209–229 (AAFWGEAILMLPFAVLGFVIK), 273–293 (VYVTNILGYIAYNFVLGAYSY), 311–331 (IFGGVTVVCGIVGTLSGGVIL), 345–362 (LSVSTFIGAIFCFAAFCF), 377–397 (LLVFATQGPVNFIVLHCVKPS), 405–425 (MSTVSIHIFGDVPSSPLVGVL), and 436–456 (SLVLTFVLFPAAAIWSIGIFL). The residue at position 466 (Ser-466) is a Phosphoserine.

This sequence belongs to the major facilitator superfamily. Spinster (TC 2.A.1.49) family.

It is found in the late endosome membrane. Its subcellular location is the lysosome membrane. Its function is as follows. Probable sphingolipid transporter that plays a central role in endosomes and/or lysosomes storage. The protein is Probable sphingolipid transporter spinster homolog 2 of Arabidopsis thaliana (Mouse-ear cress).